Here is a 398-residue protein sequence, read N- to C-terminus: Lysophosphatidylserine lipase ABHD12 (398 aa).

The span at 1–16 shows a compositional bias: basic and acidic residues; it reads MRKRTEPVALEHERRT. A disordered region spans residues 1–24; that stretch reads MRKRTEPVALEHERRTASGSPSAG. Over 1–74 the chain is Cytoplasmic; sequence MRKRTEPVAL…RKGLCFRLRK (74 aa). The chain crosses the membrane as a helical span at residues 75 to 95; it reads ILFFVLGLYVAIPFLIKLCPG. The Extracellular portion of the chain corresponds to 96–398; sequence IQAKLIFLNF…LGKSEPGRQH (303 aa). The N-linked (GlcNAc...) asparagine glycan is linked to N123. S246 acts as the Nucleophile in catalysis. Residues D333 and H372 each act as charge relay system in the active site.

The protein belongs to the serine esterase family.

Its subcellular location is the endoplasmic reticulum membrane. It catalyses the reaction 1-(9Z-octadecenoyl)-sn-glycero-3-phospho-L-serine + H2O = sn-glycero-3-phospho-L-serine + (9Z)-octadecenoate + H(+). It carries out the reaction 1-(9Z-octadecenoyl)-sn-glycero-3-phospho-(1'-sn-glycerol) + H2O = sn-glycero-3-phospho-(1'-sn-glycerol) + (9Z)-octadecenoate + H(+). The enzyme catalyses 1-(9Z-octadecenoyl)-sn-glycero-3-phospho-(1D-myo-inositol) + H2O = sn-glycero-3-phospho-1D-myo-inositol + (9Z)-octadecenoate + H(+). The catalysed reaction is 1-(9Z-octadecenoyl)-sn-glycero-3-phosphoethanolamine + H2O = sn-glycero-3-phosphoethanolamine + (9Z)-octadecenoate + H(+). It catalyses the reaction 1-(9Z-octadecenoyl)-sn-glycero-3-phosphocholine + H2O = 1-(9Z-octadecenoyl)-sn-glycerol + phosphocholine + H(+). It carries out the reaction 2-(9Z-octadecenoyl)-glycerol + H2O = glycerol + (9Z)-octadecenoate + H(+). The enzyme catalyses 1-hexadecanoyl-sn-glycero-3-phospho-L-serine + H2O = sn-glycero-3-phospho-L-serine + hexadecanoate + H(+). The catalysed reaction is 2-(5Z,8Z,11Z,14Z-eicosatetraenoyl)-glycerol + H2O = glycerol + (5Z,8Z,11Z,14Z)-eicosatetraenoate + H(+). It catalyses the reaction Hydrolyzes glycerol monoesters of long-chain fatty acids.. It carries out the reaction 1-decanoylglycerol + H2O = decanoate + glycerol + H(+). The enzyme catalyses 1-dodecanoylglycerol + H2O = dodecanoate + glycerol + H(+). The catalysed reaction is 1-tetradecanoylglycerol + H2O = tetradecanoate + glycerol + H(+). It catalyses the reaction 2-hexadecanoylglycerol + H2O = glycerol + hexadecanoate + H(+). It carries out the reaction 1-(9Z-octadecenoyl)-glycerol + H2O = glycerol + (9Z)-octadecenoate + H(+). The enzyme catalyses 2-(9Z,12Z-octadecadienoyl)-glycerol + H2O = (9Z,12Z)-octadecadienoate + glycerol + H(+). The catalysed reaction is 1-(5Z,8Z,11Z,14Z-eicosatetraenoyl)-glycerol + H2O = glycerol + (5Z,8Z,11Z,14Z)-eicosatetraenoate + H(+). It catalyses the reaction 1-(9Z,12Z-octadecadienoyl)-glycerol + H2O = (9Z,12Z)-octadecadienoate + glycerol + H(+). It carries out the reaction 1-hexadecanoylglycerol + H2O = glycerol + hexadecanoate + H(+). The enzyme catalyses 1-octadecanoylglycerol + H2O = octadecanoate + glycerol + H(+). The catalysed reaction is 1-octadecanoyl-2-(9,10-epoxyoctadecanoyl)-sn-glycero-3-phospho-L-serine + H2O = 9,10-epoxyoctadecanoate + 1-octadecanoyl-sn-glycero-3-phosphoserine + H(+). It catalyses the reaction 1-octadecanoyl-2-(10-hydroxyoctadecanoyl)-sn-glycero-3-phospho-L-serine + H2O = 1-octadecanoyl-sn-glycero-3-phosphoserine + 10-hydroxyoctadecanoate + H(+). It carries out the reaction 1-hexadecanoyl-2-(10-hydroxyoctadecanoyl)-sn-glycero-3-phospho-L-serine + H2O = 10-hydroxyoctadecanoate + 1-hexadecanoyl-sn-glycero-3-phospho-L-serine + H(+). Its function is as follows. Lysophosphatidylserine (LPS) lipase that mediates the hydrolysis of lysophosphatidylserine, a class of signaling lipids that regulates immunological and neurological processes. Represents a major lysophosphatidylserine lipase in the brain, thereby playing a key role in the central nervous system. Also able to hydrolyze oxidized phosphatidylserine; oxidized phosphatidylserine is produced in response to severe inflammatory stress and constitutes a proapoptotic 'eat me' signal. Also has monoacylglycerol (MAG) lipase activity: hydrolyzes 2-arachidonoylglycerol (2-AG), thereby acting as a regulator of endocannabinoid signaling pathways. Has a strong preference for very-long-chain lipid substrates; substrate specificity is likely due to improved catalysis and not improved substrate binding. In Bos taurus (Bovine), this protein is Lysophosphatidylserine lipase ABHD12.